The chain runs to 255 residues: Thiazole synthase (255 aa).

Lys96 acts as the Schiff-base intermediate with DXP in catalysis. 1-deoxy-D-xylulose 5-phosphate-binding positions include Gly157, 183–184 (AG), and 205–206 (NT).

This sequence belongs to the ThiG family. In terms of assembly, homotetramer. Forms heterodimers with either ThiH or ThiS.

Its subcellular location is the cytoplasm. The enzyme catalyses [ThiS sulfur-carrier protein]-C-terminal-Gly-aminoethanethioate + 2-iminoacetate + 1-deoxy-D-xylulose 5-phosphate = [ThiS sulfur-carrier protein]-C-terminal Gly-Gly + 2-[(2R,5Z)-2-carboxy-4-methylthiazol-5(2H)-ylidene]ethyl phosphate + 2 H2O + H(+). Its pathway is cofactor biosynthesis; thiamine diphosphate biosynthesis. Functionally, catalyzes the rearrangement of 1-deoxy-D-xylulose 5-phosphate (DXP) to produce the thiazole phosphate moiety of thiamine. Sulfur is provided by the thiocarboxylate moiety of the carrier protein ThiS. In vitro, sulfur can be provided by H(2)S. The polypeptide is Thiazole synthase (Anoxybacillus flavithermus (strain DSM 21510 / WK1)).